The sequence spans 352 residues: Heat-inducible transcription repressor HrcA (352 aa).

Belongs to the HrcA family.

Functionally, negative regulator of class I heat shock genes (grpE-dnaK-dnaJ and groELS operons). Prevents heat-shock induction of these operons. The polypeptide is Heat-inducible transcription repressor HrcA (Chlorobium phaeobacteroides (strain BS1)).